Reading from the N-terminus, the 333-residue chain is 2-oxoglutarate-dependent dioxygenase 21, chloroplastic (333 aa).

A chloroplast-targeting transit peptide spans 1 to 43 (MPAVAGSLYMASQHKGVPPPLPPPPRPLPVINLGRLTMDSASR). One can recognise a Fe2OG dioxygenase domain in the interval 180–281 (GVQFVALNNY…RISIASIHGL (102 aa)). Fe cation is bound by residues histidine 205, aspartate 207, and histidine 262. Arginine 272 is a binding site for 2-oxoglutarate.

Belongs to the iron/ascorbate-dependent oxidoreductase family. It depends on Fe(2+) as a cofactor. The cofactor is L-ascorbate. As to expression, expressed in roots.

The protein localises to the plastid. Its subcellular location is the chloroplast. It carries out the reaction melatonin + 2-oxoglutarate + O2 = 2-hydroxymelatonin + succinate + CO2. Involved in melatonin degradation. Catalyzes the hydroxylation of melatonin to produce 2-hydroxymelatonin. The sequence is that of 2-oxoglutarate-dependent dioxygenase 21, chloroplastic from Oryza sativa subsp. japonica (Rice).